The chain runs to 100 residues: Aspartyl/glutamyl-tRNA(Asn/Gln) amidotransferase subunit C (100 aa).

It belongs to the GatC family. Heterotrimer of A, B and C subunits.

The enzyme catalyses L-glutamyl-tRNA(Gln) + L-glutamine + ATP + H2O = L-glutaminyl-tRNA(Gln) + L-glutamate + ADP + phosphate + H(+). The catalysed reaction is L-aspartyl-tRNA(Asn) + L-glutamine + ATP + H2O = L-asparaginyl-tRNA(Asn) + L-glutamate + ADP + phosphate + 2 H(+). In terms of biological role, allows the formation of correctly charged Asn-tRNA(Asn) or Gln-tRNA(Gln) through the transamidation of misacylated Asp-tRNA(Asn) or Glu-tRNA(Gln) in organisms which lack either or both of asparaginyl-tRNA or glutaminyl-tRNA synthetases. The reaction takes place in the presence of glutamine and ATP through an activated phospho-Asp-tRNA(Asn) or phospho-Glu-tRNA(Gln). The chain is Aspartyl/glutamyl-tRNA(Asn/Gln) amidotransferase subunit C from Rickettsia felis (strain ATCC VR-1525 / URRWXCal2) (Rickettsia azadi).